A 243-amino-acid polypeptide reads, in one-letter code: Pyridoxine 5'-phosphate synthase (243 aa).

Asparagine 9 provides a ligand contact to 3-amino-2-oxopropyl phosphate. 11–12 (DH) is a 1-deoxy-D-xylulose 5-phosphate binding site. Arginine 20 lines the 3-amino-2-oxopropyl phosphate pocket. Histidine 45 functions as the Proton acceptor in the catalytic mechanism. Positions 47 and 52 each coordinate 1-deoxy-D-xylulose 5-phosphate. The active-site Proton acceptor is the glutamate 72. Residue threonine 102 coordinates 1-deoxy-D-xylulose 5-phosphate. The active-site Proton donor is the histidine 193. Residues glycine 194 and 215–216 (GH) contribute to the 3-amino-2-oxopropyl phosphate site.

Belongs to the PNP synthase family. As to quaternary structure, homooctamer; tetramer of dimers.

The protein resides in the cytoplasm. The enzyme catalyses 3-amino-2-oxopropyl phosphate + 1-deoxy-D-xylulose 5-phosphate = pyridoxine 5'-phosphate + phosphate + 2 H2O + H(+). Its pathway is cofactor biosynthesis; pyridoxine 5'-phosphate biosynthesis; pyridoxine 5'-phosphate from D-erythrose 4-phosphate: step 5/5. Catalyzes the complicated ring closure reaction between the two acyclic compounds 1-deoxy-D-xylulose-5-phosphate (DXP) and 3-amino-2-oxopropyl phosphate (1-amino-acetone-3-phosphate or AAP) to form pyridoxine 5'-phosphate (PNP) and inorganic phosphate. This chain is Pyridoxine 5'-phosphate synthase, found in Pseudoalteromonas translucida (strain TAC 125).